The chain runs to 61 residues: Small ribosomal subunit protein uS14 (61 aa).

Zn(2+) is bound by residues C24, C27, C40, and C43.

Belongs to the universal ribosomal protein uS14 family. Zinc-binding uS14 subfamily. As to quaternary structure, part of the 30S ribosomal subunit. Contacts proteins S3 and S10. Requires Zn(2+) as cofactor.

Its function is as follows. Binds 16S rRNA, required for the assembly of 30S particles and may also be responsible for determining the conformation of the 16S rRNA at the A site. This is Small ribosomal subunit protein uS14 from Parafrankia sp. (strain EAN1pec).